Consider the following 80-residue polypeptide: Cytochrome c oxidase subunit 7B, mitochondrial (80 aa).

The transit peptide at 1–24 (MFPLVKSALNRLQVRSIQQTMARQ) directs the protein to the mitochondrion. At 25–32 (SHQKRTPD) the chain is on the mitochondrial matrix side. The helical transmembrane segment at 33 to 59 (FHDKYGNAVLASGATFCIVTWTYVATQ) threads the bilayer. Over 60–80 (VGIEWNLSPVGRVTPKEWRNQ) the chain is Mitochondrial intermembrane.

The protein belongs to the cytochrome c oxidase VIIb family. In terms of assembly, component of the cytochrome c oxidase (complex IV, CIV), a multisubunit enzyme composed of 14 subunits. The complex is composed of a catalytic core of 3 subunits MT-CO1, MT-CO2 and MT-CO3, encoded in the mitochondrial DNA, and 11 supernumerary subunits COX4I1 (or COX4I2), COX5A, COX5B, COX6A1 (or COX6A2), COX6B1 (or COX6B2), COX6C, COX7A2 (or COX7A1), COX7B, COX7C, COX8A and NDUFA4, which are encoded in the nuclear genome. The complex exists as a monomer or a dimer and forms supercomplexes (SCs) in the inner mitochondrial membrane with NADH-ubiquinone oxidoreductase (complex I, CI) and ubiquinol-cytochrome c oxidoreductase (cytochrome b-c1 complex, complex III, CIII), resulting in different assemblies (supercomplex SCI(1)III(2)IV(1) and megacomplex MCI(2)III(2)IV(2)).

Its subcellular location is the mitochondrion inner membrane. Its pathway is energy metabolism; oxidative phosphorylation. Component of the cytochrome c oxidase, the last enzyme in the mitochondrial electron transport chain which drives oxidative phosphorylation. The respiratory chain contains 3 multisubunit complexes succinate dehydrogenase (complex II, CII), ubiquinol-cytochrome c oxidoreductase (cytochrome b-c1 complex, complex III, CIII) and cytochrome c oxidase (complex IV, CIV), that cooperate to transfer electrons derived from NADH and succinate to molecular oxygen, creating an electrochemical gradient over the inner membrane that drives transmembrane transport and the ATP synthase. Cytochrome c oxidase is the component of the respiratory chain that catalyzes the reduction of oxygen to water. Electrons originating from reduced cytochrome c in the intermembrane space (IMS) are transferred via the dinuclear copper A center (CU(A)) of subunit 2 and heme A of subunit 1 to the active site in subunit 1, a binuclear center (BNC) formed by heme A3 and copper B (CU(B)). The BNC reduces molecular oxygen to 2 water molecules using 4 electrons from cytochrome c in the IMS and 4 protons from the mitochondrial matrix. Plays a role in proper central nervous system (CNS) development in vertebrates. The protein is Cytochrome c oxidase subunit 7B, mitochondrial (COX7B) of Homo sapiens (Human).